Reading from the N-terminus, the 241-residue chain is Carboxysome assembly protein CcmN (241 aa).

Positions G123 to A206 are disordered. Polar residues predominate over residues Q185 to S195. The segment covering T196–A206 has biased composition (low complexity). Residues V219–S241 carry the Encapsulation peptide motif.

This sequence belongs to the CcmN family. Interacts with full-length and the N-terminal 249 residues of CcmM; a probable CcmM-CcaA-CcmN complex can also be isolated. Interacts with CcmK.

Its subcellular location is the carboxysome. In terms of biological role, required for carboxysome formation; the N-terminus interacts with CcmM which itself binds RuBisCO (ribulose bisphosphate carboxylase, rbcL-rbcS). May also contact shell protein CcmK to help assemble the carboxysome. Beta-carboxysome assembly initiates when soluble RuBisCO is condensed into a liquid matrix in a pre-carboxysome by the RbcS-like domains of probably both forms of CcmM. CcmN interacts with the N-terminus of full-length CcmM, and then recruits the CcmK major shell protein via CcmN's encapsulation peptide. Shell formation requires CcmK proteins and CcmO. CcmL caps the otherwise elongated carboxysome. Once fully encapsulated carboxysomes are formed, they migrate within the cell probably via interactions with the cytoskeleton. This is Carboxysome assembly protein CcmN from Synechocystis sp. (strain ATCC 27184 / PCC 6803 / Kazusa).